A 603-amino-acid polypeptide reads, in one-letter code: Nuclear receptor subfamily 2 group C member 1 (603 aa).

The tract at residues 1–178 is required for interaction with KAT2B; sequence MATIEEIAHQ…RLQRCIAFGM (178 aa). A DNA-binding region (nuclear receptor) is located at residues 110–185; the sequence is FDLCVVCGDK…FGMKQDSVQC (76 aa). 2 NR C4-type zinc fingers span residues 113-133 and 149-173; these read CVVC…CEGC and CRGS…LQRC. Phosphoserine occurs at positions 197 and 215. Thr220 bears the Phosphothreonine mark. Thr222 carries the phosphothreonine; by MAPK1 modification. Lys250 is covalently cross-linked (Glycyl lysine isopeptide (Lys-Gly) (interchain with G-Cter in SUMO2)). The NR LBD domain maps to 348–590; it reads GSVHLITGDS…SVIPHILKME (243 aa). The residue at position 581 (Ser581) is a Phosphoserine; by PKC. A required for interaction with NRIP1 region spans residues 584–603; that stretch reads PHILKMEPADYNSQIIGHSI. Residue Lys588 forms a Glycyl lysine isopeptide (Lys-Gly) (interchain with G-Cter in SUMO2) linkage.

Belongs to the nuclear hormone receptor family. NR2 subfamily. In terms of assembly, homodimer. Heterodimer; binds DNA as a heterodimer with NR2C2 required for chromatin remodeling and for binding to promoter regions such as globin DR1 repeats. Interacts with NRIP1 (via its LXXLL motifs); the interaction provides corepressor activity. Interacts with HDAC3 (via the DNA-binding domain). Interacts with HDAC4 (via the DNA-binding domain). Interacts with PIAS1; the interaction is required for sumoylation of NR2C1. Interacts with UBE2I; the interaction is required for sumoylation of NR2C1. Interacts with KAT2B; the interaction acts as a corepressor of gene expression. Interacts with ESR1; the interaction prevents homodimerization of ESR1 and suppresses its transcriptional activity and cell growth. Post-translationally, sumoylation requires both PIAS1 and UBE2I. Sumoylation appears to dissociate NR2C1 from the PML nuclear bodies. Enhances the interaction with NRIP1 but inhibits interaction with KAT2B. In proliferating cells, stimulation by all-trans retinoic acid, activation of MAPK1-mediated phosphorylation and recruitment to PML bodies with subsequent sumoylation, suppresses OCT4 expression. Phosphorylated on several serine and threonine residues. Phosphorylation on Thr-222, stimulated by all-trans retinoic acid (atRA) mediates PML location and sumoylation in proliferating cells which then modulates its association with effector molecules, KAT2B and NRIP1. Phosphorylation on Ser-581 by PKC is important for protein stability and function as activator of RARB.

The protein localises to the nucleus. Its subcellular location is the PML body. Its function is as follows. Orphan nuclear receptor. Binds the IR7 element in the promoter of its own gene in an autoregulatory negative feedback mechanism. Primarily repressor of a broad range of genes. Binds to hormone response elements (HREs) consisting of two 5'-AGGTCA-3' half site direct repeat consensus sequences. Together with NR2C2, forms the core of the DRED (direct repeat erythroid-definitive) complex that represses embryonic and fetal globin transcription. Also activator of OCT4 gene expression. May be involved in stem cell proliferation and differentiation. Mediator of retinoic acid-regulated preadipocyte proliferation. The sequence is that of Nuclear receptor subfamily 2 group C member 1 (NR2C1) from Homo sapiens (Human).